Consider the following 118-residue polypeptide: Mitochondrial protein YPR099C (118 aa).

It is found in the mitochondrion. Its function is as follows. Essential for the functional mitochondria and respiratory growth. The protein is Mitochondrial protein YPR099C of Saccharomyces cerevisiae (strain ATCC 204508 / S288c) (Baker's yeast).